Consider the following 740-residue polypeptide: MMQEMTPEEIKEKKPYLDWSLSEEEYDYICDKLLHRLPNYTETGLFAAMWSEHCSYKKSKSVLRLFPTKGPRILQGPGEGAGVVDIGDGQAVVFKAESHNHPTAVEPYQGAATGVGGILRDVFSMGARPVATLDSLHFGELDDAHTRWLLNETVAGIGGYGNCMGIPTVGGELTFDDIYKGNPVMNAMSVGLLDVKDMQKGLAQGEGNAVMYVGAKTGRDGIHGATFASHSFDSEHESQRSAVQVGDPFMEKLLLEACLELTQKHADWLVGIQDMGAAGIVSSSSEMASEGKSGMELNLDLVPQRESGMSAYEIMLSESQERMLLCVKKGHEEDVKKIFDFYDLDAVVIGRITSGHNYVLRHHGEVVCDIPVTSLTEDVLEEPSEEKQPQHMIDDAAKPAWEPEITDLAKTYKQMLAQPTIASKGMFTQTYDSMVRTSTVVGPGEDSGVLRVRGTHKGIAMTTDGNGRFIYLDPEIGGKRAVVEAAGNIIASGAEPLAITDCLNFGNPNEPEVFWELHHSVMGIAKACEVLETPVVSGNVSLYNETDGKSIYPTPMVGMVGLVKNLDHLVRDSFQEEGDDLYLVGQTGADYAGSELQKMLTGEIFGSLNDLDLDHIKDYQKRLLAQMEAGHVASAHDLSEGGLAVSLAESSFGHGIGAEVACDLTSAELFSETPGRFLVSVPSEYSAEFAAALAADAVKIGQTAGDSLKLTLKDQAADLPVAELKQIWEEALPCLMKSKD.

H53 is a catalytic residue. 2 residues coordinate ATP: Y56 and K95. E97 is a Mg(2+) binding site. Substrate is bound by residues 98-101 and R120; that span reads SHNH. The active-site Proton acceptor is H99. D121 contributes to the Mg(2+) binding site. A substrate-binding site is contributed by Q244. D274 contributes to the Mg(2+) binding site. 318–320 provides a ligand contact to substrate; that stretch reads ESQ. 2 residues coordinate ATP: D501 and G538. N539 contacts Mg(2+). S541 is a substrate binding site.

This sequence belongs to the FGAMS family. As to quaternary structure, monomer. Part of the FGAM synthase complex composed of 1 PurL, 1 PurQ and 2 PurS subunits.

The protein localises to the cytoplasm. The enzyme catalyses N(2)-formyl-N(1)-(5-phospho-beta-D-ribosyl)glycinamide + L-glutamine + ATP + H2O = 2-formamido-N(1)-(5-O-phospho-beta-D-ribosyl)acetamidine + L-glutamate + ADP + phosphate + H(+). It functions in the pathway purine metabolism; IMP biosynthesis via de novo pathway; 5-amino-1-(5-phospho-D-ribosyl)imidazole from N(2)-formyl-N(1)-(5-phospho-D-ribosyl)glycinamide: step 1/2. Part of the phosphoribosylformylglycinamidine synthase complex involved in the purines biosynthetic pathway. Catalyzes the ATP-dependent conversion of formylglycinamide ribonucleotide (FGAR) and glutamine to yield formylglycinamidine ribonucleotide (FGAM) and glutamate. The FGAM synthase complex is composed of three subunits. PurQ produces an ammonia molecule by converting glutamine to glutamate. PurL transfers the ammonia molecule to FGAR to form FGAM in an ATP-dependent manner. PurS interacts with PurQ and PurL and is thought to assist in the transfer of the ammonia molecule from PurQ to PurL. This is Phosphoribosylformylglycinamidine synthase subunit PurL from Lactobacillus delbrueckii subsp. bulgaricus (strain ATCC 11842 / DSM 20081 / BCRC 10696 / JCM 1002 / NBRC 13953 / NCIMB 11778 / NCTC 12712 / WDCM 00102 / Lb 14).